A 300-amino-acid polypeptide reads, in one-letter code: Protein ARMCX6 (300 aa).

The Mitochondrial intermembrane portion of the chain corresponds to 1-6; that stretch reads MGRARE. Mitochondrion outer membrane (MOM)-targeting sequence regions lie at residues 1-6 and 26-36; these read MGRARE and KLTIGRDDSEK. Residues 7-27 form a helical; Signal-anchor membrane-spanning segment; it reads VGWMAAGLMIGAGACYCVYKL. At 28–300 the chain is on the cytoplasmic side; that stretch reads TIGRDDSEKL…REILLETPAP (273 aa). 2 disordered regions span residues 35–54 and 69–99; these read EKLE…LDEE and WTED…RAHP.

It belongs to the eutherian X-chromosome-specific Armcx family.

It is found in the mitochondrion. The protein resides in the mitochondrion outer membrane. May regulate the dynamics and distribution of mitochondria in neural cells. This chain is Protein ARMCX6 (ARMCX6), found in Homo sapiens (Human).